The primary structure comprises 133 residues: ATP synthase epsilon chain, chloroplastic (133 aa).

This sequence belongs to the ATPase epsilon chain family. In terms of assembly, F-type ATPases have 2 components, CF(1) - the catalytic core - and CF(0) - the membrane proton channel. CF(1) has five subunits: alpha(3), beta(3), gamma(1), delta(1), epsilon(1). CF(0) has three main subunits: a, b and c.

The protein resides in the plastid. It localises to the chloroplast thylakoid membrane. Functionally, produces ATP from ADP in the presence of a proton gradient across the membrane. In Mesostigma viride (Green alga), this protein is ATP synthase epsilon chain, chloroplastic.